We begin with the raw amino-acid sequence, 534 residues long: MRLLTTVAALRCYLNKRRWESQLTASEEQILDSMTSWYQTAIGLVPTMGSLHQGHLSLIERARHENSTVIVSIFINPLQFGPNEDYGRYPRTLEQDRQLCEQAGVDAIFAPSPEELGIPQKNIQESQVTQVIPPSVMISGLCGHSRLGHFQGVATIVTKLLNLVQPDRAYFGQKDGQQLAVIKRLVADLNLPVEIVACPTVREASGLACSSRNQYLTAPEKQQAAVLYRGLLQAEAAFKAGVRYSSRLREVVRQELAKVSSVLVEYIELVEPTTLMPLDKIQEEGMLAIAARLGSTRLIDNTILRDRQPIIAIDGPAGAGKSTVARQVATKLGLVYLDTGAMYRAVTWLVLQQGIAIDDDCAIAELANNCKIELTPSQDLQSPVRVWINDTDVTQDIRTIEVTSQVSAIAAQAAVREALVKQQQRWGKRGGLVAEGRDIGTHVFPDAEVKIFLTASVGERARRRQQDFQKQGQPEVSLEQLEKDIAERDWKDSTRKVSPLQKAADAVELQTDGLSISDVASQIVDYYQQRLSQW.

The segment at 1-302 (MRLLTTVAAL…LGSTRLIDNT (302 aa)) is pantoate--beta-alanine ligase. 48–55 (MGSLHQGH) is an ATP binding site. The active-site Proton donor is the His-55. Gln-79 serves as a coordination point for (R)-pantoate. A beta-alanine-binding site is contributed by Gln-79. 172 to 175 (GQKD) contributes to the ATP binding site. Residue Gln-178 coordinates (R)-pantoate. ATP is bound by residues Val-201 and 209-212 (CSSR). Positions 303–534 (ILRDRQPIIA…DYYQQRLSQW (232 aa)) are cytidylate kinase.

The protein in the N-terminal section; belongs to the pantothenate synthetase family. This sequence in the C-terminal section; belongs to the cytidylate kinase family. Type 1 subfamily.

The protein resides in the cytoplasm. The catalysed reaction is (R)-pantoate + beta-alanine + ATP = (R)-pantothenate + AMP + diphosphate + H(+). It carries out the reaction CMP + ATP = CDP + ADP. The enzyme catalyses dCMP + ATP = dCDP + ADP. It functions in the pathway cofactor biosynthesis; (R)-pantothenate biosynthesis; (R)-pantothenate from (R)-pantoate and beta-alanine: step 1/1. Functionally, catalyzes the condensation of pantoate with beta-alanine in an ATP-dependent reaction via a pantoyl-adenylate intermediate. In terms of biological role, catalyzes the transfer of a phosphate group from ATP to either CMP or dCMP to form CDP or dCDP and ADP, respectively. This chain is Bifunctional pantoate ligase/cytidylate kinase, found in Trichormus variabilis (strain ATCC 29413 / PCC 7937) (Anabaena variabilis).